Consider the following 637-residue polypeptide: Threonine--tRNA ligase (637 aa).

Residues 1–61 (MLNITLPDGS…VEDSAVQIIT (61 aa)) enclose the TGS domain. The tract at residues 242-533 (DHRKLGKQLD…LIENHAGSFP (292 aa)) is catalytic. Cys-333, His-384, and His-510 together coordinate Zn(2+).

It belongs to the class-II aminoacyl-tRNA synthetase family. As to quaternary structure, homodimer. Zn(2+) is required as a cofactor.

It is found in the cytoplasm. The catalysed reaction is tRNA(Thr) + L-threonine + ATP = L-threonyl-tRNA(Thr) + AMP + diphosphate + H(+). In terms of biological role, catalyzes the attachment of threonine to tRNA(Thr) in a two-step reaction: L-threonine is first activated by ATP to form Thr-AMP and then transferred to the acceptor end of tRNA(Thr). Also edits incorrectly charged L-seryl-tRNA(Thr). The polypeptide is Threonine--tRNA ligase (Neisseria meningitidis serogroup A / serotype 4A (strain DSM 15465 / Z2491)).